Here is a 475-residue protein sequence, read N- to C-terminus: MAAPRMPPSRLSGIMVPAPIQDLEALRALTALFKEQRNRETAPRTIFQRVLDILKKSTQAVELACRDPSQVEHLASSLQLITECFRCLRNACIECSVNQNSIRNLDTIGVAVDLVLLFRELRVEQDSLLTAFRCGLQFLGNVASRNEDSQSIVWVHAFPELFMSCLNHPDKKIVAYCSMILFTSLNSERMKDLEENLNIAINVIEAHQKHPESEWPFLIITDHFLKSPELVEAMYGKLSNQERVTLLDIMIAKIVGDEQLTKDDISIFLRHAELIANSFVDQCRNVLKLTSEPQTEDKEALVTIRLLDVLCEMTSNTELLGYLQVFPGLMERVIDVLRVIHSVGKDSTNIFSPSDSLKAEGDIEHMTEGFKSHLIRLIGNLCYKNKENQDKVNELDGIPLILDSSNIDDNNPFMMQWVVYAVRNLTEDNSQNQDFIAKMEEQGLADASLLKKMGFEVEKSGDKLILKSNNDIPPP.

Arg-10 carries the omega-N-methylarginine modification. 2 positions are modified to phosphoserine: Ser-12 and Ser-77. Phosphothreonine is present on Thr-82. Phosphoserine is present on Ser-430.

It belongs to the ataxin-10 family. In terms of assembly, homooligomer. Interacts with GNB2. Interacts with IQCB1. Interacts with OGT. Post-translationally, polyubiquitinated. In terms of processing, phosphorylation at Ser-12 by AURKB promotes the association of ATXN10 with PLK1. Phosphorylation at Ser-77 and Thr-82 by PLK1 may play a role in the regulation of cytokinesis and may stimulate the proteasome-mediated degradation of ATXN10. In terms of tissue distribution, ubiquitous distribution. Markedly increased expression in testis, adrenals, and brain.

The protein resides in the cytoplasm. It localises to the perinuclear region. The protein localises to the midbody. Its subcellular location is the cytoskeleton. It is found in the cilium basal body. The protein resides in the microtubule organizing center. It localises to the centrosome. The protein localises to the centriole. Functionally, may play a role in the regulation of cytokinesis. May play a role in signaling by stimulating protein glycosylation. Induces neuritogenesis by activating the Ras-MAP kinase pathway and is necessary for the survival of cerebellar neurons. Does not appear to play a major role in ciliogenesis. In Rattus norvegicus (Rat), this protein is Ataxin-10 (Atxn10).